The following is a 336-amino-acid chain: NADH-quinone oxidoreductase subunit H (336 aa).

Transmembrane regions (helical) follow at residues 4–24, 75–95, 108–128, 154–174, 181–201, 233–253, 272–292, and 308–328; these read YILW…LVVA, YLFF…WAVI, LGLL…VIAG, MGFA…TGII, IWHW…IAGI, LFFL…SIMF, FVPG…MFLW, and LGWK…ACMV.

Belongs to the complex I subunit 1 family. As to quaternary structure, NDH-1 is composed of 14 different subunits. Subunits NuoA, H, J, K, L, M, N constitute the membrane sector of the complex.

The protein resides in the cell inner membrane. It catalyses the reaction a quinone + NADH + 5 H(+)(in) = a quinol + NAD(+) + 4 H(+)(out). In terms of biological role, NDH-1 shuttles electrons from NADH, via FMN and iron-sulfur (Fe-S) centers, to quinones in the respiratory chain. The immediate electron acceptor for the enzyme in this species is believed to be ubiquinone. Couples the redox reaction to proton translocation (for every two electrons transferred, four hydrogen ions are translocated across the cytoplasmic membrane), and thus conserves the redox energy in a proton gradient. This subunit may bind ubiquinone. This chain is NADH-quinone oxidoreductase subunit H, found in Francisella tularensis subsp. mediasiatica (strain FSC147).